The primary structure comprises 350 residues: Ferredoxin--NADP reductase (350 aa).

The FAD site is built by D49, Q57, Y62, V102, F136, D303, and T344.

Belongs to the ferredoxin--NADP reductase type 2 family. As to quaternary structure, homodimer. FAD is required as a cofactor.

It carries out the reaction 2 reduced [2Fe-2S]-[ferredoxin] + NADP(+) + H(+) = 2 oxidized [2Fe-2S]-[ferredoxin] + NADPH. This chain is Ferredoxin--NADP reductase, found in Granulibacter bethesdensis (strain ATCC BAA-1260 / CGDNIH1).